Consider the following 668-residue polypeptide: DNA ligase (668 aa).

NAD(+)-binding positions include 34-38, 83-84, and E113; these read DAEYD and SL. K115 functions as the N6-AMP-lysine intermediate in the catalytic mechanism. R136, E170, K286, and K310 together coordinate NAD(+). 4 residues coordinate Zn(2+): C404, C407, C422, and C427. The BRCT domain occupies 590–668; it reads ESDSYFAGKT…EVKMLEELKK (79 aa).

It belongs to the NAD-dependent DNA ligase family. LigA subfamily. Requires Mg(2+) as cofactor. Mn(2+) serves as cofactor.

The enzyme catalyses NAD(+) + (deoxyribonucleotide)n-3'-hydroxyl + 5'-phospho-(deoxyribonucleotide)m = (deoxyribonucleotide)n+m + AMP + beta-nicotinamide D-nucleotide.. In terms of biological role, DNA ligase that catalyzes the formation of phosphodiester linkages between 5'-phosphoryl and 3'-hydroxyl groups in double-stranded DNA using NAD as a coenzyme and as the energy source for the reaction. It is essential for DNA replication and repair of damaged DNA. The protein is DNA ligase of Bacillus pumilus (strain SAFR-032).